The chain runs to 140 residues: ATP synthase epsilon chain (140 aa).

This sequence belongs to the ATPase epsilon chain family. As to quaternary structure, F-type ATPases have 2 components, CF(1) - the catalytic core - and CF(0) - the membrane proton channel. CF(1) has five subunits: alpha(3), beta(3), gamma(1), delta(1), epsilon(1). CF(0) has three main subunits: a, b and c.

The protein resides in the cell inner membrane. In terms of biological role, produces ATP from ADP in the presence of a proton gradient across the membrane. The chain is ATP synthase epsilon chain from Neisseria meningitidis serogroup B (strain ATCC BAA-335 / MC58).